Consider the following 528-residue polypeptide: Keratin, type II cytoskeletal 78 (528 aa).

Residues 1–104 (MSLSPCRARR…DPQFQVVRTQ (104 aa)) form a head region. Residues 23–45 (VGRGRTGFSSRSLSSFGGCRGGS) form a disordered region. Positions 24 to 39 (GRGRTGFSSRSLSSFG) are enriched in low complexity. The segment at 105-140 (ETQQIRVLNNQFASFIDKVRFLEQQNKVLETKWHLL) is coil 1A. Positions 105–418 (ETQQIRVLNN…RLLEGEECRM (314 aa)) constitute an IF rod domain. Positions 141 to 159 (QQQGLSDRPQGLESFFEAY) are linker 1. Residues 160–252 (LVRLRTQLEE…LYEEELGQLQ (93 aa)) form a coil 1B region. Positions 253–275 (TQASDMSVVLSMDNNRCLDFRDL) are linker 12. Positions 276–415 (IAEVRARYEE…TYRRLLEGEE (140 aa)) are coil 2. Residues 416–528 (CRMSGECASQ…ESSLKTSVTY (113 aa)) are tail.

It belongs to the intermediate filament family. Heterotetramer of two type I and two type II keratins.

This Bos taurus (Bovine) protein is Keratin, type II cytoskeletal 78 (KRT78).